The chain runs to 597 residues: Arginine--tRNA ligase (597 aa).

A 'HIGH' region motif is present at residues 125–135 (PNTNKPLHLGH).

Belongs to the class-I aminoacyl-tRNA synthetase family. As to quaternary structure, monomer.

It is found in the cytoplasm. The enzyme catalyses tRNA(Arg) + L-arginine + ATP = L-arginyl-tRNA(Arg) + AMP + diphosphate. The sequence is that of Arginine--tRNA ligase from Bacteroides fragilis (strain ATCC 25285 / DSM 2151 / CCUG 4856 / JCM 11019 / LMG 10263 / NCTC 9343 / Onslow / VPI 2553 / EN-2).